Consider the following 78-residue polypeptide: Non-structural protein 7 (78 aa).

Positions M1–L23 are cleaved as a signal peptide. Residues L24 to V57 lie on the Lumenal side of the membrane. Residues L58 to M78 form a helical membrane-spanning segment. The segment at R59–L65 is interaction with PPP1CC/PP1-gamma.

It belongs to the coronaviruses ns7/ns7a protein family. Interacts with serine/threonine-protein phosphatase PPP1CC/PP1-gamma; this interaction; this interaction probably promotes EIF2S1/eIF-2alpha dephosphorylation.

It localises to the host membrane. Functionally, inhibits the integrated stress response (ISR) in the infected cell by promoting EIF2S1/eIF-2alpha dephosphorylation. Acts as a functional homolog of host PPP1R15A/GADD34 to recruit PP1 phosphatase and dephosphorylate host EIF2S1/eIF-2alpha. May function in the formation of membrane-bound replication complexes or in the assembly of the virus. The chain is Non-structural protein 7 from Porcine transmissible gastroenteritis coronavirus (strain Purdue) (TGEV).